We begin with the raw amino-acid sequence, 389 residues long: Probable peptidoglycan glycosyltransferase FtsW (389 aa).

Residues 1–14 (MPIRDWRQQSQRWP) are Cytoplasmic-facing. The chain crosses the membrane as a helical span at residues 15 to 35 (IDYWLIGALAILITLGLTMVA). At 36 to 57 (SSSIAISEKRFGDPTHYLLRQM) the chain is on the periplasmic side. The chain crosses the membrane as a helical span at residues 58–78 (FSMGLGLMAAYIVLKIPLSFW). Residues 79–84 (RKHRGQ) lie on the Cytoplasmic side of the membrane. A helical transmembrane segment spans residues 85 to 105 (LFIVGLVLLVLVLVFGREING). Residues 106–111 (SKRWLP) are Periplasmic-facing. Residues 112 to 132 (LVLMNFQVSEFMKIAVVVFMA) form a helical membrane-spanning segment. At 133 to 144 (GYLDRHATAVRE) the chain is on the cytoplasmic side. A helical transmembrane segment spans residues 145-165 (SFEAVIRLALPFGVMAILLLL). The Periplasmic segment spans residues 166 to 168 (EPD). Residues 169–189 (FGSTFVIAVIITGMLLIAGAP) form a helical membrane-spanning segment. Residues 190-191 (WR) lie on the Cytoplasmic side of the membrane. A helical transmembrane segment spans residues 192–212 (FFVMTVLPIATLLVMMVITSP). Residues 213–268 (YRMARVTNFLDPWSDPFGNGYQLTQALIASGRGEWFGVGIGESVQKLLYLPDAHTD) are Periplasmic-facing. Residues 269 to 289 (FLFSIYAEEYGLIGVAFLALL) form a helical membrane-spanning segment. Residues 290 to 310 (YLTLLYRCFRIGRKAFNQTHY) are Cytoplasmic-facing. The chain crosses the membrane as a helical span at residues 311 to 331 (FGGLIAYGVGIWIVLQAMINM). Topologically, residues 332 to 344 (GVNLGLFPTKGLT) are periplasmic. The chain crosses the membrane as a helical span at residues 345–365 (LPFMSYGGSSVLMLFIGVAMV). At 366–389 (LRVDLETRQAVLEHSVDESGQGKR) the chain is on the cytoplasmic side.

The protein belongs to the SEDS family. FtsW subfamily.

The protein localises to the cell inner membrane. The enzyme catalyses [GlcNAc-(1-&gt;4)-Mur2Ac(oyl-L-Ala-gamma-D-Glu-L-Lys-D-Ala-D-Ala)](n)-di-trans,octa-cis-undecaprenyl diphosphate + beta-D-GlcNAc-(1-&gt;4)-Mur2Ac(oyl-L-Ala-gamma-D-Glu-L-Lys-D-Ala-D-Ala)-di-trans,octa-cis-undecaprenyl diphosphate = [GlcNAc-(1-&gt;4)-Mur2Ac(oyl-L-Ala-gamma-D-Glu-L-Lys-D-Ala-D-Ala)](n+1)-di-trans,octa-cis-undecaprenyl diphosphate + di-trans,octa-cis-undecaprenyl diphosphate + H(+). It functions in the pathway cell wall biogenesis; peptidoglycan biosynthesis. Peptidoglycan polymerase that is essential for cell division. The chain is Probable peptidoglycan glycosyltransferase FtsW from Hydrogenovibrio crunogenus (strain DSM 25203 / XCL-2) (Thiomicrospira crunogena).